Consider the following 518-residue polypeptide: Chromosomal replication initiator protein DnaA (518 aa).

The tract at residues 1 to 72 (MTLAEFWPLC…VREELAAGRS (72 aa)) is domain I, interacts with DnaA modulators. The segment at 72-180 (SAFVFKPGEG…DAEEARYEQT (109 aa)) is domain II. The interval 145–178 (EPRQAAGSASRPESAAVAKARTDAQRDAEEARYE) is disordered. Residues 164-177 (ARTDAQRDAEEARY) show a composition bias toward basic and acidic residues. Positions 181 to 397 (NLSPDYTFDT…GAFNRVGASS (217 aa)) are domain III, AAA+ region. Positions 225, 227, 228, and 229 each coordinate ATP. Residues 398–518 (RFMNRPVIDI…YEKLLILIQN (121 aa)) form a domain IV, binds dsDNA region.

The protein belongs to the DnaA family. Oligomerizes as a right-handed, spiral filament on DNA at oriC.

Its subcellular location is the cytoplasm. Functionally, plays an essential role in the initiation and regulation of chromosomal replication. ATP-DnaA binds to the origin of replication (oriC) to initiate formation of the DNA replication initiation complex once per cell cycle. Binds the DnaA box (a 9 base pair repeat at the origin) and separates the double-stranded (ds)DNA. Forms a right-handed helical filament on oriC DNA; dsDNA binds to the exterior of the filament while single-stranded (ss)DNA is stabiized in the filament's interior. The ATP-DnaA-oriC complex binds and stabilizes one strand of the AT-rich DNA unwinding element (DUE), permitting loading of DNA polymerase. After initiation quickly degrades to an ADP-DnaA complex that is not apt for DNA replication. Binds acidic phospholipids. This is Chromosomal replication initiator protein DnaA from Neisseria meningitidis serogroup A / serotype 4A (strain DSM 15465 / Z2491).